The primary structure comprises 135 residues: Histone H3.3C (135 aa).

Positions 1 to 41 (MARTKQTARKSTGGKAPRKQLATKAARKSTPSTCGVKPHRY) are disordered. An Asymmetric dimethylarginine; by PRMT6; alternate modification is found at Arg3. At Arg3 the chain carries Citrulline; alternate. Thr4 carries the phosphothreonine; by HASPIN modification. Lys5 carries the post-translational modification Allysine; alternate. Lys5 carries the N6,N6,N6-trimethyllysine; alternate modification. At Lys5 the chain carries N6,N6-dimethyllysine; alternate. Position 5 is an N6-(2-hydroxyisobutyryl)lysine; alternate (Lys5). An N6-(beta-hydroxybutyryl)lysine; alternate modification is found at Lys5. Lys5 carries the post-translational modification N6-acetyllysine; alternate. The residue at position 5 (Lys5) is an N6-methyllysine; alternate. 5-glutamyl dopamine; alternate is present on Gln6. The residue at position 6 (Gln6) is a 5-glutamyl serotonin; alternate. Residue Thr7 is modified to Phosphothreonine; by PKC. Arg9 bears the Citrulline; alternate mark. Arg9 carries the symmetric dimethylarginine; by PRMT5; alternate modification. Lys10 is subject to N6,N6,N6-trimethyllysine; alternate. Lys10 bears the N6,N6-dimethyllysine; alternate mark. Lys10 bears the N6-(2-hydroxyisobutyryl)lysine; alternate mark. At Lys10 the chain carries N6-(beta-hydroxybutyryl)lysine; alternate. Lys10 carries the post-translational modification N6-acetyllysine; alternate. At Lys10 the chain carries N6-methyllysine; alternate. The residue at position 10 (Lys10) is an N6-lactoyllysine; alternate. Ser11 is modified (ADP-ribosylserine; alternate). At Ser11 the chain carries Phosphoserine; alternate; by AURKB, AURKC, RPS6KA3, RPS6KA4 and RPS6KA5. At Thr12 the chain carries Phosphothreonine; by PKC. An N6-(2-hydroxyisobutyryl)lysine; alternate modification is found at Lys15. N6-(beta-hydroxybutyryl)lysine; alternate is present on Lys15. Lys15 carries the post-translational modification N6-acetyllysine; alternate. Lys15 bears the N6-lactoyllysine; alternate mark. Lys15 is modified (N6-glutaryllysine; alternate). Lys15 bears the N6-succinyllysine; alternate mark. Arg18 bears the Citrulline; alternate mark. Arg18 carries the post-translational modification Asymmetric dimethylarginine; by CARM1; alternate. Lys19 and Lys24 each carry N6-(2-hydroxyisobutyryl)lysine; alternate. N6-(beta-hydroxybutyryl)lysine; alternate is present on residues Lys19 and Lys24. N6-acetyllysine; alternate occurs at positions 19 and 24. N6-methyllysine; alternate occurs at positions 19 and 24. Residues Lys19 and Lys24 each carry the N6-lactoyllysine; alternate modification. Lys19 and Lys24 each carry N6-glutaryllysine; alternate. 2 positions are modified to N6-butyryllysine; alternate: Lys19 and Lys24. Arg27 carries the post-translational modification Citrulline. Position 28 is an N6,N6,N6-trimethyllysine; alternate (Lys28). N6,N6-dimethyllysine; alternate is present on Lys28. Lys28 carries the post-translational modification N6-(2-hydroxyisobutyryl)lysine; alternate. An N6-acetyllysine; alternate modification is found at Lys28. Lys28 carries the N6-methyllysine; alternate modification. At Lys28 the chain carries N6-lactoyllysine; alternate. Lys28 carries the N6-glutaryllysine; alternate modification. Ser29 bears the ADP-ribosylserine; alternate mark. A Phosphoserine; alternate; by AURKB, AURKC and RPS6KA5 modification is found at Ser29. Ser32 is modified (phosphoserine). Residue Lys37 is modified to N6-methyllysine. Tyr41 bears the Phosphotyrosine mark. At Lys56 the chain carries N6,N6,N6-trimethyllysine; alternate. Lys56 bears the N6-(2-hydroxyisobutyryl)lysine; alternate mark. Lys56 bears the N6-(beta-hydroxybutyryl)lysine; alternate mark. N6-acetyllysine; alternate is present on Lys56. Lys56 is modified (N6-lactoyllysine; alternate). Residue Lys56 is modified to N6-glutaryllysine; alternate. The residue at position 56 (Lys56) is an N6-succinyllysine; alternate. Lys56 carries the post-translational modification N6-methyllysine; by EHMT2; alternate. Ser57 is modified (phosphoserine). N6-(2-hydroxyisobutyryl)lysine; alternate is present on Lys64. Lys64 carries the post-translational modification N6-methyllysine; alternate. Residue Thr80 is modified to Phosphothreonine. At Ser86 the chain carries Phosphoserine. Residue Thr107 is modified to Phosphothreonine. 2 positions are modified to N6-glutaryllysine; alternate: Lys115 and Lys122. Position 115 is an N6-acetyllysine (Lys115). Position 122 is an N6-(2-hydroxyisobutyryl)lysine; alternate (Lys122). Residue Lys122 is modified to N6-acetyllysine; alternate. N6-methyllysine; alternate is present on Lys122. Lys122 is subject to N6-succinyllysine; alternate.

The protein belongs to the histone H3 family. In terms of assembly, the nucleosome is a histone octamer containing two molecules each of H2A, H2B, H3 and H4 assembled in one H3-H4 heterotetramer and two H2A-H2B heterodimers. The octamer wraps approximately 147 bp of DNA. Post-translationally, acetylation is generally linked to gene activation. Acetylation on Lys-10 (H3K9ac) impairs methylation at Arg-9 (H3R8me2s). Acetylation on Lys-19 (H3K18ac) and Lys-24 (H3K24ac) favors methylation at Arg-18 (H3R17me). Acetylation at Lys-122 (H3K122ac) by EP300/p300 plays a central role in chromatin structure: localizes at the surface of the histone octamer and stimulates transcription, possibly by promoting nucleosome instability. In terms of processing, citrullination at Arg-9 (H3R8ci) and/or Arg-18 (H3R17ci) by PADI4 impairs methylation and represses transcription. Asymmetric dimethylation at Arg-18 (H3R17me2a) by CARM1 is linked to gene activation. Symmetric dimethylation at Arg-9 (H3R8me2s) by PRMT5 is linked to gene repression. Asymmetric dimethylation at Arg-3 (H3R2me2a) by PRMT6 is linked to gene repression and is mutually exclusive with H3 Lys-5 methylation (H3K4me2 and H3K4me3). H3R2me2a is present at the 3' of genes regardless of their transcription state and is enriched on inactive promoters, while it is absent on active promoters. Post-translationally, methylation at Lys-5 (H3K4me) is linked to gene activation. Methylation at Lys-5 (H3K4me) facilitates subsequent acetylation of H3 and H4. Methylation at Lys-10 (H3K9me) and Lys-28 (H3K27me) are linked to gene repression. Methylation at Lys-10 (H3K9me) is a specific target for HP1 proteins (CBX1, CBX3 and CBX5) and prevents subsequent phosphorylation at Ser-11 (H3S10ph) and acetylation of H3 and H4. Methylation at Lys-5 (H3K4me) requires preliminary monoubiquitination of H2B at 'Lys-120'. Methylation at Lys-10 (H3K9me) and Lys-28 (H3K27me) are enriched in inactive X chromosome chromatin. Monomethylation at Lys-56 (H3K56me1) by EHMT2/G9A in G1 phase promotes interaction with PCNA and is required for DNA replication. In terms of processing, phosphorylated at Thr-4 (H3T3ph) by HASPIN during prophase and dephosphorylated during anaphase. Phosphorylation at Ser-11 (H3S10ph) by AURKB is crucial for chromosome condensation and cell-cycle progression during mitosis and meiosis. In addition phosphorylation at Ser-11 (H3S10ph) by RPS6KA4 and RPS6KA5 is important during interphase because it enables the transcription of genes following external stimulation, like mitogens, stress, growth factors or UV irradiation and result in the activation of genes, such as c-fos and c-jun. Phosphorylation at Ser-11 (H3S10ph), which is linked to gene activation, prevents methylation at Lys-10 (H3K9me) but facilitates acetylation of H3 and H4. Phosphorylation at Ser-11 (H3S10ph) by AURKB mediates the dissociation of HP1 proteins (CBX1, CBX3 and CBX5) from heterochromatin. Phosphorylation at Ser-11 (H3S10ph) is also an essential regulatory mechanism for neoplastic cell transformation. Phosphorylated at Ser-29 (H3S28ph) by MAP3K20 isoform 1, RPS6KA5 or AURKB during mitosis or upon ultraviolet B irradiation. Phosphorylation at Thr-7 (H3T6ph) by PRKCB is a specific tag for epigenetic transcriptional activation that prevents demethylation of Lys-5 (H3K4me) by LSD1/KDM1A. At centromeres, specifically phosphorylated at Thr-12 (H3T11ph) from prophase to early anaphase, by DAPK3 and PKN1. Phosphorylation at Thr-12 (H3T11ph) by PKN1 or isoform M2 of PKM (PKM2) is a specific tag for epigenetic transcriptional activation that promotes demethylation of Lys-10 (H3K9me) by KDM4C/JMJD2C. Phosphorylation at Tyr-41 (H3Y41ph) by JAK2 promotes exclusion of CBX5 (HP1 alpha) from chromatin. Lysine deamination at Lys-5 (H3K4all) to form allysine is mediated by LOXL2. Allysine formation by LOXL2 only takes place on H3K4me3 and results in gene repression. Post-translationally, butyrylation of histones marks active promoters and competes with histone acetylation. It is present during late spermatogenesis. In terms of processing, succinylated. Desuccinylation at Lys-122 (H3K122succ) by SIRT7 in response to DNA damage promotes chromatin condensation and double-strand breaks (DSBs) repair. Serine ADP-ribosylation constitutes the primary form of ADP-ribosylation of proteins in response to DNA damage. Serine ADP-ribosylation at Ser-11 (H3S10ADPr) is mutually exclusive with phosphorylation at Ser-11 (H3S10ph) and impairs acetylation at Lys-10 (H3K9ac). In terms of tissue distribution, specifically expressed in the seminiferous tubules of testis.

It is found in the nucleus. Its subcellular location is the chromosome. In terms of biological role, core component of nucleosome. Nucleosomes wrap and compact DNA into chromatin, limiting DNA accessibility to the cellular machineries which require DNA as a template. Histones thereby play a central role in transcription regulation, DNA repair, DNA replication and chromosomal stability. DNA accessibility is regulated via a complex set of post-translational modifications of histones, also called histone code, and nucleosome remodeling. Hominid-specific H3.5/H3F3C preferentially colocalizes with euchromatin, and it is associated with actively transcribed genes. This chain is Histone H3.3C, found in Homo sapiens (Human).